The sequence spans 483 residues: Glycogen synthase kinase-3 alpha (483 aa).

The segment covering methionine 1 to glycine 15 has biased composition (gly residues). Positions methionine 1 to aspartate 96 are disordered. Position 2 is an N-acetylserine (serine 2). Serine 2 is modified (phosphoserine). Serine 21 carries the post-translational modification Phosphoserine; by PKB/AKT1. The span at proline 25 to alanine 82 shows a compositional bias: gly residues. Phosphoserine occurs at positions 72, 77, and 97. The Protein kinase domain maps to tyrosine 119–phenylalanine 403. ATP-binding positions include isoleucine 125 to valine 133 and lysine 148. The active-site Proton acceptor is aspartate 244. Tyrosine 279 is subject to Phosphotyrosine. Residues proline 443–serine 483 are disordered. Positions glycine 450–aspartate 469 are enriched in polar residues.

It belongs to the protein kinase superfamily. CMGC Ser/Thr protein kinase family. GSK-3 subfamily. In terms of assembly, monomer. Interacts with ARRB2, AXIN1 and CTNNB1/beta-catenin. Interacts with CTNND2. Interacts with LMBR1L. Interacts with DDX3X. Interacts with TNFRSF10B. Post-translationally, phosphorylated by AKT1 at Ser-21: upon insulin-mediated signaling, the activated PKB/AKT1 protein kinase phosphorylates and deactivates GSK3A, resulting in the dephosphorylation and activation of GYS1. Activated by phosphorylation at Tyr-279.

The enzyme catalyses L-seryl-[tau protein] + ATP = O-phospho-L-seryl-[tau protein] + ADP + H(+). The catalysed reaction is L-threonyl-[tau protein] + ATP = O-phospho-L-threonyl-[tau protein] + ADP + H(+). It carries out the reaction L-seryl-[protein] + ATP = O-phospho-L-seryl-[protein] + ADP + H(+). It catalyses the reaction L-threonyl-[protein] + ATP = O-phospho-L-threonyl-[protein] + ADP + H(+). Activated by phosphorylation at Tyr-279. In response to insulin, inhibited by phosphorylation at Ser-21 by PKB/AKT1; phosphorylation at this site causes a conformational change, preventing access of substrates to the active site. Inhibited by lithium. Its function is as follows. Constitutively active protein kinase that acts as a negative regulator in the hormonal control of glucose homeostasis, Wnt signaling and regulation of transcription factors and microtubules, by phosphorylating and inactivating glycogen synthase (GYS1 or GYS2), CTNNB1/beta-catenin, APC and AXIN1. Requires primed phosphorylation of the majority of its substrates. Contributes to insulin regulation of glycogen synthesis by phosphorylating and inhibiting GYS1 activity and hence glycogen synthesis. Regulates glycogen metabolism in liver, but not in muscle. May also mediate the development of insulin resistance by regulating activation of transcription factors. In Wnt signaling, regulates the level and transcriptional activity of nuclear CTNNB1/beta-catenin. Facilitates amyloid precursor protein (APP) processing and the generation of APP-derived amyloid plaques found in Alzheimer disease. May be involved in the regulation of replication in pancreatic beta-cells. Is necessary for the establishment of neuronal polarity and axon outgrowth. Through phosphorylation of the anti-apoptotic protein MCL1, may control cell apoptosis in response to growth factors deprivation. Acts as a regulator of autophagy by mediating phosphorylation of KAT5/TIP60 under starvation conditions, activating KAT5/TIP60 acetyltransferase activity and promoting acetylation of key autophagy regulators, such as ULK1 and RUBCNL/Pacer. Negatively regulates extrinsic apoptotic signaling pathway via death domain receptors. Promotes the formation of an anti-apoptotic complex, made of DDX3X, BRIC2 and GSK3B, at death receptors, including TNFRSF10B. The anti-apoptotic function is most effective with weak apoptotic signals and can be overcome by stronger stimulation. This chain is Glycogen synthase kinase-3 alpha (Gsk3a), found in Rattus norvegicus (Rat).